The primary structure comprises 284 residues: MFLATFKLCAGSSYRHMRNMKGLRHQAVLAIGQELNWRALGDSSPGWMGQVRRRSSLLGSQLEATLYSDQELSYIQQGEVAMQKALGILNNQEGWKKESQQENGDEVLSKMVPDVGKVFRLEVVVDQPMDRLYEELVDRMEAMGEWNPNVKEIKVLQRIGKDTVITHELAAAAAGNLVGPRDFVSVRCTKRRGSTCVLAGMATHFGEMPEQSGVIRAEHGPTCMVLHPLAGSPSKTKLTWLLSIDLKGWLPKTIINQVLSQTQIEFANHLRKRLEASPASEAQC.

The N-terminal 62 residues, 1–62 (MFLATFKLCA…RRSSLLGSQL (62 aa)), are a transit peptide targeting the mitochondrion. Residues serine 56 and serine 194 each carry the phosphoserine; by PKA modification. The 214-residue stretch at 66–279 (LYSDQELSYI…LRKRLEASPA (214 aa)) folds into the START domain.

In terms of assembly, may interact with TSPO. In terms of tissue distribution, expressed within glia and neurons in discrete regions of the brain.

Its subcellular location is the mitochondrion. It catalyses the reaction cholesterol(in) = cholesterol(out). The protein operates within steroid metabolism; cholesterol metabolism. In terms of biological role, plays a key role in steroid hormone synthesis by enhancing the metabolism of cholesterol into pregnenolone. Transporter that binds to and transport cholesterol through the intermembrane space of the mitochondrion. The chain is Steroidogenic acute regulatory protein, mitochondrial (Star) from Mus musculus (Mouse).